The sequence spans 287 residues: Undecaprenyl-diphosphatase (287 aa).

Helical transmembrane passes span 6–26, 45–65, 89–109, 111–131, 204–224, 238–258, and 266–286; these read LHLL…FIPV, SGKV…MWIF, NLLL…KSIK, VFYH…IMLW, ATEF…VYDL, AIAV…RAVL, and YRVF…WIYA.

The protein belongs to the UppP family.

Its subcellular location is the cell inner membrane. It catalyses the reaction di-trans,octa-cis-undecaprenyl diphosphate + H2O = di-trans,octa-cis-undecaprenyl phosphate + phosphate + H(+). Functionally, catalyzes the dephosphorylation of undecaprenyl diphosphate (UPP). Confers resistance to bacitracin. The chain is Undecaprenyl-diphosphatase from Bordetella bronchiseptica (strain ATCC BAA-588 / NCTC 13252 / RB50) (Alcaligenes bronchisepticus).